Reading from the N-terminus, the 1048-residue chain is Putative cation efflux system protein SilA (1048 aa).

The next 14 membrane-spanning stretches (helical) occupy residues 14 to 34 (FLVM…IINT), 125 to 145 (VSSE…YALV), 338 to 358 (LSSK…LFLW), 363 to 383 (ALVA…VMHF), 391 to 411 (MSLG…IVMI), 446 to 466 (VGPA…PIFT), 485 to 505 (SMAG…GFWI), 539 to 559 (TLLV…QVGG), 737 to 757 (GMTV…AMVG), 871 to 891 (KLKL…YLAF), 897 to 917 (ALLI…FLYW), 928 to 948 (TGFI…LMYL), 985 to 1005 (AMTV…TGAG), and 1012 to 1032 (IAAP…FIIP).

The protein belongs to the resistance-nodulation-cell division (RND) (TC 2.A.6) family.

The protein localises to the cell inner membrane. In terms of biological role, component of the sil cation-efflux system that confers resistance to silver. May be part of a three-component cation/proton antiporter. This is Putative cation efflux system protein SilA (silA) from Salmonella typhimurium.